Here is a 222-residue protein sequence, read N- to C-terminus: Pro-opiomelanocortin (222 aa).

The N-terminal stretch at 1-18 is a signal peptide; it reads MCPVWLLVAVVVVGGSRG. A propeptide spanning residues 19 to 90 is cleaved from the precursor; that stretch reads AVSQCWEHPS…SSSSSSSPQS (72 aa). 2 disordered regions span residues 56-98 and 148-170; these read IPGN…SMEH and EEEK…LQEK. Residues 70-93 show a composition bias toward low complexity; it reads PSSSSSFILPSSSSSSSSPQSKRS. A compositionally biased stretch (acidic residues) spans 148 to 162; the sequence is EEEKAQEVMAEEEEE.

The protein belongs to the POMC family. Specific enzymatic cleavages at paired basic residues yield the different active peptides.

Its subcellular location is the secreted. Stimulates the adrenal glands to release cortisol. Its function is as follows. Anorexigenic peptide. Increases the pigmentation of skin by increasing melanin production in melanocytes. In terms of biological role, increases the pigmentation of skin by increasing melanin production in melanocytes. Functionally, endogenous orexigenic opiate. Endogenous opiate. The protein is Pro-opiomelanocortin (pomc) of Thunnus obesus (Bigeye tuna).